The primary structure comprises 695 residues: U1 snRNP-associated protein usp107 (695 aa).

The segment covering 85–96 has biased composition (basic and acidic residues); the sequence is RDNESQQKDRKN. The tract at residues 85–134 is disordered; sequence RDNESQQKDRKNLPRNQKSNEIQEKQTFQTPSSEKSTTERESRPFVPPNS. Residues 98 to 113 show a composition bias toward polar residues; it reads PRNQKSNEIQEKQTFQ. The RRM domain occupies 139 to 221; sequence RMLFIGNIPK…PSTRLSLITD (83 aa). Residues 265 to 369 are a coiled coil; that stretch reads DVRSRIERAA…NLLSKHRISR (105 aa). Basic and acidic residues-rich tracts occupy residues 487 to 506 and 548 to 561; these read EEDA…RTRG and SERR…RLLL. Disordered regions lie at residues 487–509 and 540–590; these read EEDA…GEGA and QTKK…AEKT. The region spanning 605 to 695 is the PWI domain; it reads ESLWALPIDW…HVLLILRSEA (91 aa).

As to quaternary structure, component of the U1 snRNP particle, a subcomplex of the spliceosome. Interacts with prp5 and usp102.

The protein localises to the cytoplasm. Its subcellular location is the nucleus. Its function is as follows. Component of the U1 snRNP particle, which recognizes and binds the 5'-splice site of pre-mRNA. Together with other non-snRNP factors, U1 snRNP forms the spliceosomal commitment complex, that targets pre-mRNA to the splicing pathway. The protein is U1 snRNP-associated protein usp107 (usp107) of Schizosaccharomyces pombe (strain 972 / ATCC 24843) (Fission yeast).